The sequence spans 287 residues: Ribonuclease Z (287 aa).

7 residues coordinate Zn(2+): histidine 64, histidine 66, aspartate 68, histidine 69, histidine 124, aspartate 191, and histidine 250. Residue aspartate 68 is the Proton acceptor of the active site.

Belongs to the RNase Z family. As to quaternary structure, homodimer. Zn(2+) serves as cofactor.

The catalysed reaction is Endonucleolytic cleavage of RNA, removing extra 3' nucleotides from tRNA precursor, generating 3' termini of tRNAs. A 3'-hydroxy group is left at the tRNA terminus and a 5'-phosphoryl group is left at the trailer molecule.. In terms of biological role, zinc phosphodiesterase, which displays some tRNA 3'-processing endonuclease activity. Probably involved in tRNA maturation, by removing a 3'-trailer from precursor tRNA. In Pyrobaculum arsenaticum (strain DSM 13514 / JCM 11321 / PZ6), this protein is Ribonuclease Z.